The following is a 67-amino-acid chain: Large ribosomal subunit protein bL31 (67 aa).

C16, C18, C36, and C39 together coordinate Zn(2+).

It belongs to the bacterial ribosomal protein bL31 family. Type A subfamily. In terms of assembly, part of the 50S ribosomal subunit. Zn(2+) serves as cofactor.

Binds the 23S rRNA. This chain is Large ribosomal subunit protein bL31, found in Treponema pallidum (strain Nichols).